Reading from the N-terminus, the 160-residue chain is Protein-export protein SecB (160 aa).

It belongs to the SecB family. As to quaternary structure, homotetramer, a dimer of dimers. One homotetramer interacts with 1 SecA dimer.

It is found in the cytoplasm. In terms of biological role, one of the proteins required for the normal export of preproteins out of the cell cytoplasm. It is a molecular chaperone that binds to a subset of precursor proteins, maintaining them in a translocation-competent state. It also specifically binds to its receptor SecA. This chain is Protein-export protein SecB, found in Nitrosomonas eutropha (strain DSM 101675 / C91 / Nm57).